The primary structure comprises 303 residues: Probable 5-dehydro-4-deoxyglucarate dehydratase (303 aa).

Belongs to the DapA family.

The enzyme catalyses 5-dehydro-4-deoxy-D-glucarate + H(+) = 2,5-dioxopentanoate + CO2 + H2O. The protein operates within carbohydrate acid metabolism; D-glucarate degradation; 2,5-dioxopentanoate from D-glucarate: step 2/2. This Acidovorax ebreus (strain TPSY) (Diaphorobacter sp. (strain TPSY)) protein is Probable 5-dehydro-4-deoxyglucarate dehydratase.